The sequence spans 227 residues: Ribosomal RNA large subunit methyltransferase E (227 aa).

Positions 78, 80, 103, 119, and 143 each coordinate S-adenosyl-L-methionine. Residue Lys-183 is the Proton acceptor of the active site.

Belongs to the class I-like SAM-binding methyltransferase superfamily. RNA methyltransferase RlmE family.

Its subcellular location is the cytoplasm. The enzyme catalyses uridine(2552) in 23S rRNA + S-adenosyl-L-methionine = 2'-O-methyluridine(2552) in 23S rRNA + S-adenosyl-L-homocysteine + H(+). In terms of biological role, specifically methylates the uridine in position 2552 of 23S rRNA at the 2'-O position of the ribose in the fully assembled 50S ribosomal subunit. The chain is Ribosomal RNA large subunit methyltransferase E from Rickettsia africae (strain ESF-5).